Reading from the N-terminus, the 128-residue chain is NADPH-dependent 7-cyano-7-deazaguanine reductase (128 aa).

C34 (thioimide intermediate) is an active-site residue. Residue D41 is the Proton donor of the active site. Substrate contacts are provided by residues 56–58 and 75–76; these read IEL and HE.

This sequence belongs to the GTP cyclohydrolase I family. QueF type 1 subfamily.

It is found in the cytoplasm. The catalysed reaction is 7-aminomethyl-7-carbaguanine + 2 NADP(+) = 7-cyano-7-deazaguanine + 2 NADPH + 3 H(+). Its pathway is tRNA modification; tRNA-queuosine biosynthesis. In terms of biological role, catalyzes the NADPH-dependent reduction of 7-cyano-7-deazaguanine (preQ0) to 7-aminomethyl-7-deazaguanine (preQ1). This is NADPH-dependent 7-cyano-7-deazaguanine reductase from Ruthia magnifica subsp. Calyptogena magnifica.